Consider the following 410-residue polypeptide: Structural protein ORF142 (410 aa).

Disordered stretches follow at residues 1–24 and 156–197; these read MNQNHTLDNERNDDDEHSNNHVDT and PTST…VNIS. The segment covering 161–188 has biased composition (acidic residues); it reads DDNDNENRSDDDDDDDDYRNDREEVEDS.

It localises to the virion. This chain is Structural protein ORF142, found in Trichoplusia ni ascovirus 2c (TnAV-2c).